Reading from the N-terminus, the 427-residue chain is 3-phosphoshikimate 1-carboxyvinyltransferase (427 aa).

3-phosphoshikimate-binding residues include K22, S23, and R27. Residue K22 coordinates phosphoenolpyruvate. G96 and R124 together coordinate phosphoenolpyruvate. The 3-phosphoshikimate site is built by S169, S170, Q171, S197, D313, N336, and K340. Q171 provides a ligand contact to phosphoenolpyruvate. D313 (proton acceptor) is an active-site residue. Phosphoenolpyruvate is bound by residues R344, R386, and K411.

Belongs to the EPSP synthase family. In terms of assembly, monomer.

Its subcellular location is the cytoplasm. The enzyme catalyses 3-phosphoshikimate + phosphoenolpyruvate = 5-O-(1-carboxyvinyl)-3-phosphoshikimate + phosphate. It functions in the pathway metabolic intermediate biosynthesis; chorismate biosynthesis; chorismate from D-erythrose 4-phosphate and phosphoenolpyruvate: step 6/7. In terms of biological role, catalyzes the transfer of the enolpyruvyl moiety of phosphoenolpyruvate (PEP) to the 5-hydroxyl of shikimate-3-phosphate (S3P) to produce enolpyruvyl shikimate-3-phosphate and inorganic phosphate. The protein is 3-phosphoshikimate 1-carboxyvinyltransferase of Salmonella choleraesuis (strain SC-B67).